We begin with the raw amino-acid sequence, 266 residues long: Short-chain dehydrogenase/reductase atnB (266 aa).

Residues Ile-13, Asp-57, and Asn-85 each coordinate NADP(+). Active-site proton donor residues include Ser-147 and Tyr-166. 4 residues coordinate NADP(+): Tyr-166, Lys-170, Val-199, and Thr-201. Residue Lys-170 is the Lowers pKa of active site Tyr of the active site.

Belongs to the short-chain dehydrogenases/reductases (SDR) family.

It functions in the pathway secondary metabolite biosynthesis; terpenoid biosynthesis. Short-chain dehydrogenase/reductase; part of the gene cluster that mediates the biosynthesis of the meroterpenoids arthripenoids. The pathway begins with the HR-PKS atnH that catalyzes two chain-extension steps to form a reduced triketide, which then primes the SAT domain in the NR-PKS atnG to initiate three more cycles of extension to give a linear hexaketide corresponding to the polyketide part of arthripenoids. The FAD-dependent monooxygenase atnJ then performs an oxidative decarboxylation at C11 of the atnH/atnG product, via an electrophilic aromatic hydroxylation with concomitant ipso-decarboxylation. The membrane-bound polyprenyl transferase atnF then introduces a farnesyl group before the FAD-dependent monooxygenase atnK functions as the first epoxidase on terminal C12'-C13' olefin, followed by a second epoxidation on C7'-C8' catalyzed by atnA. The terpene cyclase/mutase atnI then initiates the sequential tricyclic ring formation through protonation of the terminal epoxide and catalyzes the regioselective and stereoselective 6/6/6-tricyclic ring formation. The cytochrome P450 monooxygenase atnM is responsible for hydroxylating both C1' and C10'. The next steps may involve ketoreduction and acetyl transfer by the ketoreductase atnB and the acetyltransferase atnC, and lead to the production of arthripenoid B, the final biosynthetic product of the atn cluster. The hydroquinone moiety in arthripenoid B is prone to undergo spontaneous oxidation to afford a benzoquinone compound, a key intermediate for generating structure diversity. For instance, addition of a cysteine followed by ring contraction gives arthripenoid A, tautomerization gives the main product arthripenoid C, addition of a molecular of water or amine affords arthripenoid D or E, respectively, and loss of one water forms arthripenoid F. In Arthrinium sp, this protein is Short-chain dehydrogenase/reductase atnB.